The chain runs to 511 residues: Mesoderm induction early response protein 1 (511 aa).

A compositionally biased stretch (low complexity) spans 1–16; sequence MAEPSVESSSPGGSAT. The interval 1–171 is disordered; that stretch reads MAEPSVESSS…EEESEEDEDY (171 aa). A Phosphoserine modification is found at Ser10. The span at 17 to 36 shows a compositional bias: basic and acidic residues; it reads SEDHEFDPSADMLVHDFDDE. Positions 37–46 are enriched in acidic residues; sequence RTLEEEEMME. Positions 57-66 are enriched in basic and acidic residues; the sequence is DLAREGDMPI. The segment covering 83-104 has biased composition (acidic residues); sequence EEEEEEEEEEEGEDDEDADNDD. Over residues 128–143 the composition is skewed to polar residues; sequence QSSNDDPSQSVTSQDA. Residue Ser140 is modified to Phosphoserine. A Phosphotyrosine modification is found at Tyr154. 2 positions are modified to phosphoserine: Ser159 and Ser165. The segment covering 159–171 has biased composition (acidic residues); that stretch reads SEIEEESEEDEDY. The 99-residue stretch at 179–277 folds into the ELM2 domain; it reads KEIMVGSMFQ…EALRRLRFNV (99 aa). Residue Lys238 forms a Glycyl lysine isopeptide (Lys-Gly) (interchain with G-Cter in SUMO2) linkage. The SANT domain occupies 282 to 334; the sequence is EELSVWTEEECRNFEQGLKAYGKDFHLIQANKVRTRSVGECVAFYYMWKKSER. The tract at residues 365–511 is disordered; sequence ESESAASSRA…KFEEHENTND (147 aa). A phosphoserine mark is found at Ser366, Ser368, and Ser376. The span at 397-408 shows a compositional bias: polar residues; the sequence is SSRNQNGVSSNG. Composition is skewed to basic and acidic residues over residues 413–422 and 461–474; these read LNKEEVKVEG and ARNE…NERP. A Glycyl lysine isopeptide (Lys-Gly) (interchain with G-Cter in SUMO2) cross-link involves residue Lys419. The span at 481-493 shows a compositional bias: polar residues; it reads NSSGKESPGSSEF. 3 positions are modified to phosphoserine: Ser482, Ser487, and Ser490. A compositionally biased stretch (basic and acidic residues) spans 499–511; the sequence is SHGKFEEHENTND.

Interacts with HDAC1. Part of a complex containing at least CDYL, MIER1, MIER2, HDAC1 and HDAC2. Ubiquitously expressed. Isoform 1 is only expressed in testis.

It is found in the nucleus. Its function is as follows. Transcriptional repressor regulating the expression of a number of genes including SP1 target genes. Probably functions through recruitment of HDAC1 a histone deacetylase involved in chromatin silencing. The polypeptide is Mesoderm induction early response protein 1 (Mier1) (Mus musculus (Mouse)).